A 454-amino-acid chain; its full sequence is Carbon catabolite repressor protein 4 homolog 5 (454 aa).

Residues 1-76 form a disordered region; it reads MSGYERKNTT…SLRRRRRTKE (76 aa). The segment covering 31-41 has biased composition (basic and acidic residues); the sequence is VYEKSNRKESI. The segment covering 61–75 has biased composition (basic residues); it reads VRHSKSSLRRRRRTK. Glu-153 serves as a coordination point for Mg(2+).

Belongs to the CCR4/nocturin family. As to quaternary structure, component of the CCR4-NOT complex, at least composed of CRR4 and CAF1 proteins. The cofactor is Mg(2+).

The protein localises to the nucleus. Its subcellular location is the cytoplasm. The enzyme catalyses Exonucleolytic cleavage of poly(A) to 5'-AMP.. In terms of biological role, acts as a catalytic component of the CCR4-NOT core complex, which in the nucleus seems to be a general transcription factor, and in the cytoplasm the major mRNA deadenylase involved in mRNA turnover. This Arabidopsis thaliana (Mouse-ear cress) protein is Carbon catabolite repressor protein 4 homolog 5 (CCR4-5).